The chain runs to 116 residues: Small ribosomal subunit protein bS16 (116 aa).

It belongs to the bacterial ribosomal protein bS16 family.

The sequence is that of Small ribosomal subunit protein bS16 from Chlamydia trachomatis serovar L2 (strain ATCC VR-902B / DSM 19102 / 434/Bu).